The primary structure comprises 445 residues: Chromosome partition protein MukF (445 aa).

Positions Leu213–Ile241 are leucine-zipper.

This sequence belongs to the MukF family. As to quaternary structure, interacts, and probably forms a ternary complex, with MukE and MukB via its C-terminal region. The complex formation is stimulated by calcium or magnesium. It is required for an interaction between MukE and MukB.

It is found in the cytoplasm. The protein localises to the nucleoid. Involved in chromosome condensation, segregation and cell cycle progression. May participate in facilitating chromosome segregation by condensation DNA from both sides of a centrally located replisome during cell division. Not required for mini-F plasmid partitioning. Probably acts via its interaction with MukB and MukE. Overexpression results in anucleate cells. It has a calcium binding activity. This is Chromosome partition protein MukF from Vibrio atlanticus (strain LGP32) (Vibrio splendidus (strain Mel32)).